The primary structure comprises 104 residues: UPF0235 protein RBE_0633 (104 aa).

The protein belongs to the UPF0235 family.

The polypeptide is UPF0235 protein RBE_0633 (Rickettsia bellii (strain RML369-C)).